A 3001-amino-acid chain; its full sequence is BEACH domain-containing protein C2 (3001 aa).

Disordered regions lie at residues 43 to 80, 103 to 156, 1018 to 1076, 1846 to 1868, 2039 to 2071, 2101 to 2132, and 2193 to 2212; these read DFEQ…SSFG, DVQS…KATV, NVLA…NVGS, TFSS…PRDK, YSGT…SNPP, AEEH…RTSN, and NLAD…DRSW. Phosphoserine is present on serine 48. Composition is skewed to polar residues over residues 57–72, 121–132, and 1037–1050; these read NESQ…FSNS, SMQQSLSETSLD, and SPYN…QLDS. The span at 1854 to 1863 shows a compositional bias: pro residues; the sequence is LEPPNNNAPP. A compositionally biased stretch (basic and acidic residues) spans 2101 to 2119; sequence AEEHKRDEGRISGSHEHAS. Polar residues predominate over residues 2120-2129; the sequence is RTSAGNSDPR. Residues 2151–2260 form the BEACH-type PH domain; the sequence is ELDERILLEL…GRRNAYRAIV (110 aa). A compositionally biased stretch (basic and acidic residues) spans 2196-2211; that stretch reads DHSDESQSGDQEKDRS. The BEACH domain maps to 2275 to 2564; it reads QRPEQLLRRT…QLLTVPHMKR (290 aa). WD repeat units lie at residues 2679–2718, 2721–2760, 2802–2841, 2842–2881, and 2953–2992; these read SGIR…TLET, GHCA…TSRT, GHRR…LIRR, LVGV…IAKA, and GQGQ…LKVV.

This is BEACH domain-containing protein C2 from Arabidopsis thaliana (Mouse-ear cress).